A 122-amino-acid chain; its full sequence is Large ribosomal subunit protein uL18 (122 aa).

Positions 1–21 are enriched in basic residues; sequence MSKLSRKQQTQKRHRRLRRHI. The disordered stretch occupies residues 1 to 25; sequence MSKLSRKQQTQKRHRRLRRHITGTS.

This sequence belongs to the universal ribosomal protein uL18 family. In terms of assembly, part of the 50S ribosomal subunit; part of the 5S rRNA/L5/L18/L25 subcomplex. Contacts the 5S and 23S rRNAs.

In terms of biological role, this is one of the proteins that bind and probably mediate the attachment of the 5S RNA into the large ribosomal subunit, where it forms part of the central protuberance. The protein is Large ribosomal subunit protein uL18 of Synechococcus sp. (strain CC9902).